Here is a 393-residue protein sequence, read N- to C-terminus: Methylthioribose kinase (393 aa).

ATP is bound by residues asparagine 38, lysine 53, and 107 to 109 (EDL). Aspartate 225 is a binding site for substrate. ATP is bound at residue 242–244 (DPE). A substrate-binding site is contributed by arginine 332.

The protein belongs to the methylthioribose kinase family. Homodimer.

It carries out the reaction 5-(methylsulfanyl)-D-ribose + ATP = 5-(methylsulfanyl)-alpha-D-ribose 1-phosphate + ADP + H(+). The protein operates within amino-acid biosynthesis; L-methionine biosynthesis via salvage pathway; S-methyl-5-thio-alpha-D-ribose 1-phosphate from S-methyl-5'-thioadenosine (hydrolase route): step 2/2. Catalyzes the phosphorylation of methylthioribose into methylthioribose-1-phosphate. This is Methylthioribose kinase from Bacillus cereus (strain ATCC 10987 / NRS 248).